A 288-amino-acid chain; its full sequence is Quinate/shikimate dehydrogenase (288 aa).

Substrate contacts are provided by Lys71 and Asp107. Residues Ala132–Ala135, Asn155–Asp158, Lys205, Cys232–Asn235, and Gly255 each bind NAD(+).

This sequence belongs to the shikimate dehydrogenase family. In terms of assembly, homodimer.

It catalyses the reaction L-quinate + NAD(+) = 3-dehydroquinate + NADH + H(+). The catalysed reaction is L-quinate + NADP(+) = 3-dehydroquinate + NADPH + H(+). The enzyme catalyses shikimate + NADP(+) = 3-dehydroshikimate + NADPH + H(+). It carries out the reaction shikimate + NAD(+) = 3-dehydroshikimate + NADH + H(+). Its pathway is metabolic intermediate biosynthesis; chorismate biosynthesis; chorismate from D-erythrose 4-phosphate and phosphoenolpyruvate: step 4/7. The actual biological function of YdiB remains unclear, nor is it known whether 3-dehydroshikimate or quinate represents the natural substrate. Catalyzes the reversible NAD-dependent reduction of both 3-dehydroshikimate (DHSA) and 3-dehydroquinate to yield shikimate (SA) and quinate, respectively. It can use both NAD or NADP for catalysis, however it has higher catalytic efficiency with NAD. The protein is Quinate/shikimate dehydrogenase of Shigella flexneri.